The chain runs to 181 residues: Adenine phosphoribosyltransferase (181 aa).

It belongs to the purine/pyrimidine phosphoribosyltransferase family. In terms of assembly, homodimer.

It is found in the cytoplasm. It catalyses the reaction AMP + diphosphate = 5-phospho-alpha-D-ribose 1-diphosphate + adenine. It participates in purine metabolism; AMP biosynthesis via salvage pathway; AMP from adenine: step 1/1. Catalyzes a salvage reaction resulting in the formation of AMP, that is energically less costly than de novo synthesis. In Colwellia psychrerythraea (strain 34H / ATCC BAA-681) (Vibrio psychroerythus), this protein is Adenine phosphoribosyltransferase.